We begin with the raw amino-acid sequence, 142 residues long: Transcriptional regulator MraZ (142 aa).

2 consecutive SpoVT-AbrB domains span residues E5 to E48 and A77 to T120.

Belongs to the MraZ family. As to quaternary structure, forms oligomers.

The protein resides in the cytoplasm. It is found in the nucleoid. This Dehalococcoides mccartyi (strain ATCC BAA-2100 / JCM 16839 / KCTC 5957 / BAV1) protein is Transcriptional regulator MraZ.